Reading from the N-terminus, the 201-residue chain is Probable molybdenum cofactor guanylyltransferase (201 aa).

Residues 16–18, Lys28, Asp75, and Asp107 contribute to the GTP site; that span reads LAG. Residue Asp107 participates in Mg(2+) binding.

It belongs to the MobA family. It depends on Mg(2+) as a cofactor.

It localises to the cytoplasm. The enzyme catalyses Mo-molybdopterin + GTP + H(+) = Mo-molybdopterin guanine dinucleotide + diphosphate. Functionally, transfers a GMP moiety from GTP to Mo-molybdopterin (Mo-MPT) cofactor (Moco or molybdenum cofactor) to form Mo-molybdopterin guanine dinucleotide (Mo-MGD) cofactor. The sequence is that of Probable molybdenum cofactor guanylyltransferase from Mycobacterium marinum (strain ATCC BAA-535 / M).